The sequence spans 254 residues: Ribosomal RNA small subunit methyltransferase A (254 aa).

6 residues coordinate S-adenosyl-L-methionine: N12, L14, G38, E59, D83, and N100.

This sequence belongs to the class I-like SAM-binding methyltransferase superfamily. rRNA adenine N(6)-methyltransferase family. RsmA subfamily.

The protein localises to the cytoplasm. The catalysed reaction is adenosine(1518)/adenosine(1519) in 16S rRNA + 4 S-adenosyl-L-methionine = N(6)-dimethyladenosine(1518)/N(6)-dimethyladenosine(1519) in 16S rRNA + 4 S-adenosyl-L-homocysteine + 4 H(+). Its function is as follows. Specifically dimethylates two adjacent adenosines (A1518 and A1519) in the loop of a conserved hairpin near the 3'-end of 16S rRNA in the 30S particle. May play a critical role in biogenesis of 30S subunits. The polypeptide is Ribosomal RNA small subunit methyltransferase A (Mycoplasma mobile (strain ATCC 43663 / 163K / NCTC 11711) (Mesomycoplasma mobile)).